The following is a 353-amino-acid chain: Chorismate synthase (353 aa).

Residues arginine 48 and arginine 54 each coordinate NADP(+). FMN-binding positions include 125–127, 238–239, glycine 278, 293–297, and arginine 319; these read RSS, NA, and KPTSS.

It belongs to the chorismate synthase family. In terms of assembly, homotetramer. The cofactor is FMNH2.

It carries out the reaction 5-O-(1-carboxyvinyl)-3-phosphoshikimate = chorismate + phosphate. Its pathway is metabolic intermediate biosynthesis; chorismate biosynthesis; chorismate from D-erythrose 4-phosphate and phosphoenolpyruvate: step 7/7. In terms of biological role, catalyzes the anti-1,4-elimination of the C-3 phosphate and the C-6 proR hydrogen from 5-enolpyruvylshikimate-3-phosphate (EPSP) to yield chorismate, which is the branch point compound that serves as the starting substrate for the three terminal pathways of aromatic amino acid biosynthesis. This reaction introduces a second double bond into the aromatic ring system. This Bordetella bronchiseptica (strain ATCC BAA-588 / NCTC 13252 / RB50) (Alcaligenes bronchisepticus) protein is Chorismate synthase.